Reading from the N-terminus, the 773-residue chain is Angiomotin-like protein 2 (773 aa).

Disordered regions lie at residues 41–157 (GGAG…HVRS), 169–238 (RNGA…SPHF), and 259–309 (QYQY…LAQM). 3 stretches are compositionally biased toward basic and acidic residues: residues 80–91 (QGGETHLAENRL), 100–112 (KGEELPTYEEAKA), and 141–152 (RRQDEALRELRH). The interval 101–302 (GEELPTYEEA…GPPGAQATSG (202 aa)) is required for interaction with CDH5. Tyr107 bears the Phosphotyrosine; by FGFR1 mark. Over residues 177 to 190 (HMSSSHSFPQLARS) the composition is skewed to polar residues. The segment covering 196–213 (PRGPPAEGPEPRGPPPQY) has biased composition (pro residues). The tract at residues 220 to 302 (QETAAVNDPR…GPPGAQATSG (83 aa)) is required for interaction with CDH1. Residues 304–577 (AHLAQMESVL…KYLEERAMRQ (274 aa)) adopt a coiled-coil conformation. Glycyl lysine isopeptide (Lys-Gly) (interchain with G-Cter in ubiquitin) cross-links involve residues Lys342 and Lys403. Disordered regions lie at residues 589 to 611 (QRDTTLIRHSPQPSPSSSFNEGL) and 677 to 754 (WQGF…TTSL). A compositionally biased stretch (pro residues) spans 701 to 710 (EEPPATPPLP). Residues 719–734 (DGSTQTDGPADSTSAC) are compositionally biased toward polar residues. 2 positions are modified to phosphoserine: Ser753 and Ser756. A PDZ-binding motif is present at residues 770–773 (EILI).

Belongs to the angiomotin family. Part of a complex composed of AMOTL2, MAGI1 and CDH5, within the complex AMOTL2 acts as a scaffold protein for the interaction of MAGI1 with CDH5. The complex is required for coupling actin fibers to cell junctions in endothelial cells. Within the complex AMOTL2 (via its N-terminus) interacts with CDH5. Interacts (via N-terminus) with MAGI1. Interacts (via N-terminus) with ACTB; the interaction facilitates binding of cell junction complexes to actin fibers in endothelial cells. Interacts with CDH1; the interaction may facilitate binding of radial actin fibers to cell junction complexes. Interacts with SRC. Interacts with YAP1; the interaction is required for ubiquitination of AMOTL2 and localization of YAP1 to tight junctions. Interacts with WWP1; the interaction facilitates WWP1 interaction with the Crumbs complex and subsequent WWP1 translocation to the plasma membrane. WWP1 interaction with the Crumbs complex promotes WWP1 monoubiquitination of AMOTL2 which subsequently activates the Hippo signaling pathway. When ubiquitinated interacts with LATS2 (via UBA domain); the interaction promotes LATS2 phosphorylation of YAP1. Interacts (via PPXY motif) with WWTR1/TAZ (via WW domain); the interaction promotes WWTR1/TAZ localization to the cytoplasm and thereby inhibition of its transcriptional properties. Interacts with PHLDB2; interaction may facilitate PHLDB2 localization to the myotube podosome cortex that surrounds the core. Monoubiquitinated at Lys-342 and Lys-403 by Crumbs complex-bound WWP1. De-ubiquitinated at Lys-342 and Lys-403 by USP9X; the interaction may be promoted by cell contact inhibition. Deubiquitination of AMOTL2 negatively regulates Hippo signaling activation. Post-translationally, phosphorylation at Tyr-107 is necessary for efficient binding to SRC and synergistically functioning with SRC to activate the downstream MAPK pathway.

It localises to the recycling endosome. It is found in the cytoplasm. The protein resides in the cell projection. The protein localises to the podosome. Its subcellular location is the cell junction. Regulates the translocation of phosphorylated SRC to peripheral cell-matrix adhesion sites. Required for proper architecture of actin filaments. Plays a role in coupling actin fibers to cell junctions in endothelial cells and is therefore required for correct endothelial cell morphology via facilitating transcellular transmission of mechanical force resulting in endothelial cell elongation. Required for the anchoring of radial actin fibers to CDH1 junction complexes at the cell membrane which facilitates organization of radial actin fiber structure and cellular response to contractile forces. This contributes to maintenance of cell area, size, shape, epithelial sheet organization and trophectoderm cell properties that facilitate blastocyst zona hatching. Inhibits the Wnt/beta-catenin signaling pathway, probably by recruiting CTNNB1 to recycling endosomes and hence preventing its translocation to the nucleus. Participates in angiogenesis. Activates the Hippo signaling pathway in response to cell contact inhibition via interaction with and ubiquitination by Crumbs complex-bound WWP1. Ubiquitinated AMOTL2 then interacts with LATS2 which in turn phosphorylates YAP1, excluding it from the nucleus and localizing it to the cytoplasm and tight junctions, therefore ultimately repressing YAP1-driven transcription of target genes. Acts to inhibit WWTR1/TAZ transcriptional coactivator activity via sequestering WWTR1/TAZ in the cytoplasm and at tight junctions. Regulates the size and protein composition of the podosome cortex and core at myofibril neuromuscular junctions. Selectively promotes FGF-induced MAPK activation through SRC. May play a role in the polarity, proliferation and migration of endothelial cells. The sequence is that of Angiomotin-like protein 2 from Rattus norvegicus (Rat).